Reading from the N-terminus, the 422-residue chain is MTVKTTVSTKDIDEAFLRLKDIVKETPLQLDHYLSQKYDCKVYLKREDLQWVRSFKLRGAYNAISVLSDEAKSKGITCASAGNHAQGVVYTAKKLNLNAVIFMPVTTPLQKVNQVKFFGNSNVEVVLTGDTFDHCLAEALTYTSEHQMNFIDPFNNVHTISGQGTLAKEMLEQSKSDNVNFDYLFAAIGGGGLISGISTYFKSYSPNTKIIGVEPSGASSMYESVVVNNQVITLPNIDKFVDGASVARVGDITFEIAKKNVDNYVQVDEGAVCSTILDMYSKQAIVAEPAGALSVSALENYKDHIKGKTVVCVISGGNNDINRMKEIEERSLLYEEMKHYFILNFPQRPGALREFVNDVLGPQDDITKFEYLKKSSQNTGTVIIGIQLKDHDDLIQLKQRVNHFDPSNIYINENKMLHSLLI.

Lys-56 bears the N6-(pyridoxal phosphate)lysine mark. Pyridoxal 5'-phosphate contacts are provided by residues Asn-83, 189 to 193, and Ser-315; that span reads GGGGL. An ACT-like domain is found at 339-413; the sequence is HYFILNFPQR…FDPSNIYINE (75 aa).

This sequence belongs to the serine/threonine dehydratase family. As to quaternary structure, homotetramer. Requires pyridoxal 5'-phosphate as cofactor.

The catalysed reaction is L-threonine = 2-oxobutanoate + NH4(+). The protein operates within amino-acid biosynthesis; L-isoleucine biosynthesis; 2-oxobutanoate from L-threonine: step 1/1. In terms of biological role, catalyzes the anaerobic formation of alpha-ketobutyrate and ammonia from threonine in a two-step reaction. The first step involved a dehydration of threonine and a production of enamine intermediates (aminocrotonate), which tautomerizes to its imine form (iminobutyrate). Both intermediates are unstable and short-lived. The second step is the nonenzymatic hydrolysis of the enamine/imine intermediates to form 2-ketobutyrate and free ammonia. In the low water environment of the cell, the second step is accelerated by RidA. In Staphylococcus aureus (strain bovine RF122 / ET3-1), this protein is L-threonine dehydratase biosynthetic IlvA (ilvA).